Consider the following 292-residue polypeptide: Undecaprenyl-diphosphatase (292 aa).

The next 5 membrane-spanning stretches (helical) occupy residues 87 to 107 (MGWYVIIGSIPIGVAGLLFEE), 113 to 133 (FRDLRLTALTLIVFGVLLGMV), 190 to 210 (AFLLAMPAVFASGLYKLKDIG), 219 to 239 (ATIVGTLVAFAVGYAVIAWFM), and 250 to 270 (FVYYRIALGILILALVSFGVL).

It belongs to the UppP family.

The protein localises to the cell membrane. It carries out the reaction di-trans,octa-cis-undecaprenyl diphosphate + H2O = di-trans,octa-cis-undecaprenyl phosphate + phosphate + H(+). Catalyzes the dephosphorylation of undecaprenyl diphosphate (UPP). Confers resistance to bacitracin. This Thermobifida fusca (strain YX) protein is Undecaprenyl-diphosphatase.